The chain runs to 329 residues: MKILFAGTPKPAAIVLEHLLTDPRLEVLGVITQPDARRGRGRSLHPSPVAEVAEGAGLKVHKWHSLGASSEDAAAVRETLAAYREAGATAVAVVAYGNLIPADLLDAVEHGWVNLHYSLLPRWRGAAPVQAAIAAGDQETGATIFRIEQGLDTGPMLSKKAYEIGIRETAEEVLIELTNSGKSLLADTLVELGEGSATPQPQPEEGATHAPKLHPADARIDFSAPAKVIQRRARAHTPAPGAWCTLDGQRYKFGLMLPVAEGEEFPELAPGQLWADKTRVLVGTGDTPLLVETIQPPGKKMMRAADWARGQQELLAQSPRFDIEEDTAK.

118-121 (SLLP) provides a ligand contact to (6S)-5,6,7,8-tetrahydrofolate.

It belongs to the Fmt family.

It catalyses the reaction L-methionyl-tRNA(fMet) + (6R)-10-formyltetrahydrofolate = N-formyl-L-methionyl-tRNA(fMet) + (6S)-5,6,7,8-tetrahydrofolate + H(+). Its function is as follows. Attaches a formyl group to the free amino group of methionyl-tRNA(fMet). The formyl group appears to play a dual role in the initiator identity of N-formylmethionyl-tRNA by promoting its recognition by IF2 and preventing the misappropriation of this tRNA by the elongation apparatus. In Corynebacterium urealyticum (strain ATCC 43042 / DSM 7109), this protein is Methionyl-tRNA formyltransferase.